Consider the following 301-residue polypeptide: NAD kinase (301 aa).

Residue aspartate 73 is the Proton acceptor of the active site. Residues 73–74, 151–152, arginine 179, aspartate 181, 192–197, alanine 216, and glutamine 250 each bind NAD(+); these read DG, ND, and TAYALS.

Belongs to the NAD kinase family. A divalent metal cation is required as a cofactor.

The protein localises to the cytoplasm. The enzyme catalyses NAD(+) + ATP = ADP + NADP(+) + H(+). Functionally, involved in the regulation of the intracellular balance of NAD and NADP, and is a key enzyme in the biosynthesis of NADP. Catalyzes specifically the phosphorylation on 2'-hydroxyl of the adenosine moiety of NAD to yield NADP. The protein is NAD kinase of Methylibium petroleiphilum (strain ATCC BAA-1232 / LMG 22953 / PM1).